We begin with the raw amino-acid sequence, 793 residues long: Signal transducer and activator of transcription 5A (793 aa).

The residue at position 90 (tyrosine 90) is a Phosphotyrosine. Residue serine 128 is modified to Phosphoserine. The region spanning 589-686 (WNDGAILGFV…EVFAKYYTPV (98 aa)) is the SH2 domain. Phosphotyrosine is present on residues tyrosine 682 and tyrosine 694. Serine 779 is modified (phosphoserine).

The protein belongs to the transcription factor STAT family. As to quaternary structure, forms a homodimer or a heterodimer with a related family member. Interacts with NCOA1 and SOCS7. Binds NR3C1. Interacts with ERBB4. Interacts with EBF4. Interacts with CD69. ISGylated. In terms of processing, tyrosine phosphorylated in response to KITLG/SCF, IL2, IL3, IL7, IL15, CSF2/GMCSF, GH1, PRL, EPO and THPO. Activated KIT promotes phosphorylation on tyrosine residues and subsequent translocation to the nucleus. Tyrosine phosphorylated in response to constitutively activated FGFR1, FGFR2, FGFR3 and FGFR4. Tyrosine phosphorylation is required for DNA-binding activity and dimerization. Serine phosphorylation is also required for maximal transcriptional activity. Tyrosine phosphorylated in response to signaling via activated FLT3; wild-type FLT3 results in much weaker phosphorylation than constitutively activated mutant FLT3. Alternatively, can be phosphorylated by JAK2 at Tyr-694. In the virgin, found in most tissues except brain and muscle. During lactation, abundantly found in mammary tissue, as well as in other secretory organs such as salivary gland and seminal vesicle.

Its subcellular location is the cytoplasm. It localises to the nucleus. Carries out a dual function: signal transduction and activation of transcription. Mediates cellular responses to the cytokine KITLG/SCF and other growth factors. May mediate cellular responses to activated FGFR1, FGFR2, FGFR3 and FGFR4. Binds to the GAS element and activates PRL-induced transcription. Regulates the expression of milk proteins during lactation. This Mus musculus (Mouse) protein is Signal transducer and activator of transcription 5A (Stat5a).